The following is a 182-amino-acid chain: UPF0397 protein SPT_0523 (182 aa).

A run of 5 helical transmembrane segments spans residues 10 to 30 (VVAVGIGAALFVVIGMINIPT), 46 to 66 (LLSIIFGPIIGLLVGLIGHAI), 73 to 93 (YGLWWTWIIASGLFGLVVGLF), 109 to 129 (ILIFNLIQLLANALVWGVLAP), and 148 to 168 (IVAGIANGVSVAIAGTLLLLA).

It belongs to the UPF0397 family.

It localises to the cell membrane. The sequence is that of UPF0397 protein SPT_0523 from Streptococcus pneumoniae (strain Taiwan19F-14).